We begin with the raw amino-acid sequence, 131 residues long: mRNA stability protein IGO2 (131 aa).

Over residues 1–13 (MSEDLSPTSSRVD) the composition is skewed to polar residues. The segment at 1-26 (MSEDLSPTSSRVDLSNPHGFTKEGVD) is disordered. An N-acetylserine modification is found at Ser2. Phosphoserine is present on residues Ser6, Ser63, Ser108, and Ser119. The segment at 81–131 (VNNSSNNLPVTNPSGLRESIIRRRMSSSSGGDSISRQGSISSGPPPRSPNK) is disordered. Residues 106–122 (SSSSGGDSISRQGSISS) show a composition bias toward low complexity.

This sequence belongs to the endosulfine family. Phosphorylated by RIM15.

It is found in the cytoplasm. It localises to the nucleus. Its function is as follows. Required for TORC1 to properly control gene expression and chronological life span. Plays an essential role in initiation of the G0 program by preventing the degradation of specific nutrient-regulated mRNAs via the 5'-3' mRNA decay pathway. In Saccharomyces cerevisiae (strain ATCC 204508 / S288c) (Baker's yeast), this protein is mRNA stability protein IGO2 (IGO2).